The primary structure comprises 260 residues: Neuraminyllactose-binding hemagglutinin (260 aa).

Positions 1–27 (MRANNHFKDFAWKKCLLGASVVALLVG) are cleaved as a signal peptide. Residue C28 is the site of N-palmitoyl cysteine attachment. C28 carries the S-diacylglycerol cysteine lipid modification. The segment at 134 to 139 (KRTIQK) is N-acetyl-neuraminyl-alpha(2,3)-lactose binding motif.

The protein localises to the cell outer membrane. This chain is Neuraminyllactose-binding hemagglutinin (hpaA), found in Helicobacter pylori (Campylobacter pylori).